A 113-amino-acid polypeptide reads, in one-letter code: Integration host factor subunit alpha (113 aa).

Belongs to the bacterial histone-like protein family. In terms of assembly, heterodimer of an alpha and a beta chain.

Its function is as follows. This protein is one of the two subunits of integration host factor, a specific DNA-binding protein that functions in genetic recombination as well as in transcriptional and translational control. This is Integration host factor subunit alpha from Rhodopseudomonas palustris (strain BisA53).